The following is a 143-amino-acid chain: Large ribosomal subunit protein uL15 (143 aa).

Basic residues-rich tracts occupy residues 1–14 (MIRKSKKITKKRGS) and 23–38 (KKHRGAGHRGGRGNAG). The tract at residues 1–38 (MIRKSKKITKKRGSRTCGYGEAKKHRGAGHRGGRGNAG) is disordered.

It belongs to the universal ribosomal protein uL15 family. In terms of assembly, part of the 50S ribosomal subunit.

Its function is as follows. Binds to the 23S rRNA. The polypeptide is Large ribosomal subunit protein uL15 (Methanococcus maripaludis (strain DSM 14266 / JCM 13030 / NBRC 101832 / S2 / LL)).